Consider the following 529-residue polypeptide: uncharacterized protein (529 aa).

2 ABC transporter domains span residues 6 to 257 (LAIE…QKLL) and 287 to 526 (IRKG…RQLL). Residues 42 to 49 (GESGSGKS) and 319 to 326 (GESGSGKS) contribute to the ATP site.

It belongs to the ABC transporter superfamily.

This is an uncharacterized protein from Escherichia coli (strain K12).